The sequence spans 78 residues: uncharacterized protein (78 aa).

A disordered region spans residues 58–78; sequence EANDPEKKIPSTAAKAISLSP.

This is an uncharacterized protein from Vaccinia virus (strain Copenhagen) (VACV).